Here is a 175-residue protein sequence, read N- to C-terminus: Transcription factor E (175 aa).

In terms of domain architecture, HTH TFE/IIEalpha-type spans 3–88; it reads ENPLIQQVLF…TWKPSLEKVP (86 aa).

Belongs to the TFE family. As to quaternary structure, monomer. Interaction with RNA polymerase subunits RpoF and RpoE is necessary for Tfe stimulatory transcription activity. Able to interact with Tbp and RNA polymerase in the absence of DNA promoter. Interacts both with the preinitiation and elongation complexes.

Its function is as follows. Transcription factor that plays a role in the activation of archaeal genes transcribed by RNA polymerase. Facilitates transcription initiation by enhancing TATA-box recognition by TATA-box-binding protein (Tbp), and transcription factor B (Tfb) and RNA polymerase recruitment. Not absolutely required for transcription in vitro, but particularly important in cases where Tbp or Tfb function is not optimal. It dynamically alters the nucleic acid-binding properties of RNA polymerases by stabilizing the initiation complex and destabilizing elongation complexes. Seems to translocate with the RNA polymerase following initiation and acts by binding to the non template strand of the transcription bubble in elongation complexes. The protein is Transcription factor E of Methanococcus maripaludis (strain DSM 14266 / JCM 13030 / NBRC 101832 / S2 / LL).